The chain runs to 270 residues: Interleukin-1 beta (270 aa).

The propeptide occupies Met-1 to Asp-118.

It belongs to the IL-1 family. Monomer. In its precursor form, weakly interacts with full-length MEFV; the mature cytokine does not interact at all. Interacts with integrins ITGAV:ITGBV and ITGA5:ITGB1; integrin-binding is required for IL1B signaling. Interacts with cargo receptor TMED10; the interaction is direct and is required for the secretion of IL1B mature form. Interacts with HSP90AB1; the interaction facilitates cargo translocation into the ERGIC. Interacts with HSP90B1; the interaction facilitates cargo translocation into the ERGIC.

The protein localises to the cytoplasm. Its subcellular location is the cytosol. It localises to the secreted. It is found in the lysosome. The protein resides in the extracellular exosome. Functionally, potent pro-inflammatory cytokine. Initially discovered as the major endogenous pyrogen, induces prostaglandin synthesis, neutrophil influx and activation, T-cell activation and cytokine production, B-cell activation and antibody production, and fibroblast proliferation and collagen production. Promotes Th17 differentiation of T-cells. Synergizes with IL12/interleukin-12 to induce IFNG synthesis from T-helper 1 (Th1) cells. Plays a role in angiogenesis by inducing VEGF production synergistically with TNF and IL6. Involved in transduction of inflammation downstream of pyroptosis: its mature form is specifically released in the extracellular milieu by passing through the gasdermin-D (GSDMD) pore. This is Interleukin-1 beta (IL1B) from Mustela putorius furo (European domestic ferret).